The sequence spans 254 residues: uncharacterized protein (254 aa).

The NADP(+) site is built by Val-7 and Asn-85. The Proton donor role is filled by Ser-136. Positions 150, 154, 181, and 183 each coordinate NADP(+). Tyr-150 acts as the Proton acceptor in catalysis. Lys-154 serves as the catalytic Lowers pKa of active site Tyr.

Belongs to the short-chain dehydrogenases/reductases (SDR) family.

This is an uncharacterized protein from Saccharomyces cerevisiae (strain ATCC 204508 / S288c) (Baker's yeast).